The chain runs to 477 residues: Argininosuccinate lyase (477 aa).

It belongs to the lyase 1 family. Argininosuccinate lyase subfamily.

Its subcellular location is the cytoplasm. The enzyme catalyses 2-(N(omega)-L-arginino)succinate = fumarate + L-arginine. Its pathway is amino-acid biosynthesis; L-arginine biosynthesis; L-arginine from L-ornithine and carbamoyl phosphate: step 3/3. The chain is Argininosuccinate lyase from Acinetobacter baumannii (strain AB307-0294).